The chain runs to 502 residues: Nucleoside transporter 2 (502 aa).

Residues 1-30 (MTTSSDSAMVNHTPSPWYKFGFKSFAEFNT) lie on the Cytoplasmic side of the membrane. The chain crosses the membrane as a helical span at residues 31–51 (YVTFVFLGMSIMMVASAVTSA). Residues 52–81 (PDFLTRYYVYATGDPDAVAETPLFWNNANT) lie on the Extracellular side of the membrane. The helical transmembrane segment at 82–102 (FYNAGTYVLQVLTELFSLTPF) threads the bilayer. Over 103-111 (MRRIPLSVR) the chain is Cytoplasmic. A helical membrane pass occupies residues 112–132 (LFVGLGIPFAELLLIIIVPAA). The Extracellular segment spans residues 133 to 137 (TIKSQ). The helical transmembrane segment at 138-158 (HGAIAVIMVVACVGGFSKALC) threads the bilayer. Over 159-178 (DSCTNALVGPFPTKFMNGAQ) the chain is Cytoplasmic. A helical transmembrane segment spans residues 179–199 (WGLTVIALLMSIIQIILKVSM). Over 200 to 210 (GTSFHDILTMS) the chain is Extracellular. The chain crosses the membrane as a helical span at residues 211–231 (RIYFGICIGIQLFAIFELAIL). The Cytoplasmic portion of the chain corresponds to 232 to 352 (RFNPFAQKYI…SVFKRVYPML (121 aa)). The segment at 252–273 (AQNNESTLEETAPSMNEPAAGD) is disordered. Residues 353–373 (VCVFLIYFTSLLTFPGVFFLV) form a helical membrane-spanning segment. The Extracellular segment spans residues 374–380 (STTSGWY). The helical transmembrane segment at 381-401 (MTVIVTLFNAGDFISRMVLMF) threads the bilayer. The Cytoplasmic portion of the chain corresponds to 402-408 (RPLRPSP). The helical transmembrane segment at 409 to 429 (KVVVAGTLGRLIIIPFLVLCV) threads the bilayer. Residues 430 to 436 (RGIIRGE) lie on the Extracellular side of the membrane. The chain crosses the membrane as a helical span at residues 437–457 (ALPYVLITLLGLTNGYFGCMA). The Cytoplasmic segment spans residues 458-477 (CIHCPRTTTLRYAGERSLAA). Residues 478–498 (MLSGISIMLGLCFGSNLSLAI) traverse the membrane as a helical segment. The Extracellular segment spans residues 499–502 (TLTH).

Belongs to the SLC29A/ENT transporter (TC 2.A.57) family.

Its subcellular location is the cell membrane. The enzyme catalyses inosine(in) = inosine(out). It carries out the reaction guanosine(in) = guanosine(out). High affinity transporter for inosine and guanosine. The polypeptide is Nucleoside transporter 2 (Crithidia fasciculata).